A 470-amino-acid chain; its full sequence is Neuraminidase (470 aa).

Residues 1–6 are Intravirion-facing; sequence MNPNQK. Residues 7 to 27 traverse the membrane as a helical segment; that stretch reads IITIGSICMAIGIISLILQIG. An involved in apical transport and lipid raft association region spans residues 11–33; sequence GSICMAIGIISLILQIGNIISIW. Residues 28-470 lie on the Virion surface side of the membrane; that stretch reads NIISIWVSHS…GAELPFTIDK (443 aa). Positions 36-90 are hypervariable stalk region; the sequence is HSIQTGSQNHTGICNQRIITYENSTWVNQTYVNISNTNVVAGKDTTSMTLAGNSS. N-linked (GlcNAc...) asparagine; by host glycosylation is found at N44, N58, N63, N68, and N88. The head of neuraminidase stretch occupies residues 91-470; it reads LCPIRGWAIY…GAELPFTIDK (380 aa). 8 disulfides stabilise this stretch: C92/C417, C124/C129, C184/C231, C233/C238, C279/C292, C281/C290, C318/C335, and C421/C447. R118 is a binding site for substrate. An N-linked (GlcNAc...) asparagine; by host glycan is attached at N146. Catalysis depends on D151, which acts as the Proton donor/acceptor. Residue R152 participates in substrate binding. N235 carries an N-linked (GlcNAc...) asparagine; by host glycan. 277–278 serves as a coordination point for substrate; it reads EE. R293 is a substrate binding site. 3 residues coordinate Ca(2+): D294, G298, and D324. N365 carries N-linked (GlcNAc...) asparagine; by host glycosylation. R368 contributes to the substrate binding site. The Nucleophile role is filled by Y402. A glycan (N-linked (GlcNAc...) asparagine; by host) is linked at N455.

The protein belongs to the glycosyl hydrolase 34 family. As to quaternary structure, homotetramer. Requires Ca(2+) as cofactor. In terms of processing, N-glycosylated.

It is found in the virion membrane. It localises to the host apical cell membrane. It catalyses the reaction Hydrolysis of alpha-(2-&gt;3)-, alpha-(2-&gt;6)-, alpha-(2-&gt;8)- glycosidic linkages of terminal sialic acid residues in oligosaccharides, glycoproteins, glycolipids, colominic acid and synthetic substrates.. Inhibited by the neuraminidase inhibitors zanamivir (Relenza) and oseltamivir (Tamiflu). These drugs interfere with the release of progeny virus from infected cells and are effective against all influenza strains. Resistance to neuraminidase inhibitors is quite rare. Its function is as follows. Catalyzes the removal of terminal sialic acid residues from viral and cellular glycoconjugates. Cleaves off the terminal sialic acids on the glycosylated HA during virus budding to facilitate virus release. Additionally helps virus spread through the circulation by further removing sialic acids from the cell surface. These cleavages prevent self-aggregation and ensure the efficient spread of the progeny virus from cell to cell. Otherwise, infection would be limited to one round of replication. Described as a receptor-destroying enzyme because it cleaves a terminal sialic acid from the cellular receptors. May facilitate viral invasion of the upper airways by cleaving the sialic acid moieties on the mucin of the airway epithelial cells. Likely to plays a role in the budding process through its association with lipid rafts during intracellular transport. May additionally display a raft-association independent effect on budding. Plays a role in the determination of host range restriction on replication and virulence. Sialidase activity in late endosome/lysosome traffic seems to enhance virus replication. The polypeptide is Neuraminidase (Influenza A virus (strain A/Brazil/11/1978 H1N1)).